Consider the following 389-residue polypeptide: Tubulin-like protein CetZ3 (389 aa).

GTP-binding positions include 10–14 (QAGGK), 110–112 (GTG), glutamate 142, asparagine 169, and asparagine 187.

This sequence belongs to the CetZ family.

The protein resides in the cytoplasm. Involved in cell shape control. This is Tubulin-like protein CetZ3 from Haloferax volcanii (strain ATCC 29605 / DSM 3757 / JCM 8879 / NBRC 14742 / NCIMB 2012 / VKM B-1768 / DS2) (Halobacterium volcanii).